A 751-amino-acid polypeptide reads, in one-letter code: Nibrin (751 aa).

The 60-residue stretch at 24 to 83 (YVVGRKNCGILIENDQSISRNHAVLTVNFPVTSLSQTDEIPTLTIKDNSKYGTFVNEEKM) folds into the FHA domain. BRCT domains are found at residues 105-181 (KFRV…SEFL) and 224-315 (GKTF…LAVI). The mediates interaction with SP100 stretch occupies residues 111–328 (EPLVVCSSCL…TENYCNPQGQ (218 aa)). The tract at residues 221 to 403 (IFKGKTFVFL…SRKLSQETFN (183 aa)) is interaction with MTOR, MAPKAP1 and RICTOR. The residue at position 337 (Thr-337) is a Phosphothreonine. The residue at position 343 (Ser-343) is a Phosphoserine; by ATM. Residues Ser-347 and Ser-398 each carry the phosphoserine modification. The disordered stretch occupies residues 389–418 (GLEQSSRKLSQETFNIKEAPKPSSKANNVA). Residue Ser-433 is modified to Phosphoserine; by CDK2. A Glycyl lysine isopeptide (Lys-Gly) (interchain with G-Cter in ubiquitin) cross-link involves residue Lys-436. 2 disordered regions span residues 444 to 479 (KDWT…SSCK) and 491 to 550 (EQTQ…RKRK). Positions 446–457 (WTSQQQQNSIKN) are enriched in polar residues. The Nuclear localization signal motif lies at 461–467 (PCTRKRE). 2 stretches are compositionally biased toward basic and acidic residues: residues 502–518 (KSKE…READ) and 528–539 (ELNRKSPDRKPL). At Ser-508 the chain carries Phosphoserine. Residues Lys-569 and Lys-580 each participate in a glycyl lysine isopeptide (Lys-Gly) (interchain with G-Cter in SUMO2) cross-link. Residues 576 to 645 (VKVEKQEADD…ANSDGLQDSS (70 aa)) form a disordered region. Basic and acidic residues-rich tracts occupy residues 577-599 (KVEK…ERNR) and 615-636 (EDER…HEIA). Residues Lys-684, Lys-688, and Lys-733 each participate in a glycyl lysine isopeptide (Lys-Gly) (interchain with G-Cter in ubiquitin) cross-link. A compositionally biased stretch (basic and acidic residues) spans 731–742 (QAKEESLADDLF). The interval 731 to 751 (QAKEESLADDLFRYNPNVKRR) is disordered. The FxF/Y motif signature appears at 738 to 747 (ADDLFRYNPN).

The protein belongs to the Nibrin family. In terms of assembly, component of the MRN complex composed of two heterodimers RAD50 and MRE11 associated with a single NBN. The MRN complexes dimerize on DNA to form joined MRN-MRN oligomers required for DNA double-strand break repair. As part of the MRN complex, interacts with MCM9; the interaction recruits the complex to DNA repair sites. Component of the BASC complex, at least composed of BRCA1, MSH2, MSH6, MLH1, ATM, BLM, RAD50, MRE11 and NBN. Interacts with histone H2AX; this requires phosphorylation of H2AX on 'Ser-139' and promotes NBN recruitment to DNA damage sites. Interacts with (phosphorylated) MDC1; promoting NBN recruitment to DNA damage sites. Interacts with (phosphorylated) RAD17; promoting NBN recruitment to DNA damage sites. Interacts (via FxF/Y motif) with ATM. Interacts with HJURP. Interacts with INTS3. Interacts with KPNA2. Interacts with TERF2; interaction is disrupted upon NBN phosphorylation by CDK2. Interacts with (phosphorylated) RBBP8/CtIP; the interaction links the role of the MRN complex in DNA double-strand break sensing to resection. Interacts with SP100; recruits NBN to PML bodies. Interacts with ATF2. Interacts with MTOR, MAPKAP1 isoform 2 and RICTOR; indicative for an association with the mTORC2 complex. Interacts with MRNIP. Interacts with UFL1; promoting UFL1 recruitment to double-strand breaks following DNA damage. Interacts with CYREN (via XLF motif). Ubiquitinated at Lys-436 via 'Lys-6'-linked ubiquitin chains by RNF8, promoting NBN recruitment to DNA double-strand breaks (DSBs). Ubiquitinated at Lys-684 and Lys-688 via 'Lys-63'-linked ubiquitin chains by PELI1: ubiquitination takes place following PELI1 phosphorylation and promotes ATM activation and DNA repair. Ubiquitinated at Lys-733 via 'Lys-63'-linked ubiquitin chains by the SCF(SKP2) complex: ubiquitination takes place following SKP2 phosphorylation and promotes ATM activation and DNA repair. In terms of processing, phosphorylated by ATM in response of ionizing radiation, and such phosphorylation is responsible intra-S phase checkpoint control and telomere maintenance. Phosphorylated at Ser-433 by CDK2 in S/G2 phases abolishes interaction with TERF2, enabling DCLRE1B/Apollo recruitment to telomeres. Phosphorylation at Ser-433 in response to dysfunctional telomeres promotes non-homologous end joining repair at telomeres, while dephosphorylation by PPP1CA promotes microhomology-mediated end-joining (MMEJ) repair. High expression in the liver, heart and testis. Low expression in all other tissues analyzed. In the cerebellum the postmitotic Purkinje cells are marked specifically.

Its subcellular location is the nucleus. The protein localises to the chromosome. The protein resides in the PML body. It localises to the telomere. Functionally, component of the MRN complex, which plays a central role in double-strand break (DSB) repair, DNA recombination, maintenance of telomere integrity and meiosis. The MRN complex is involved in the repair of DNA double-strand breaks (DSBs) via homologous recombination (HR), an error-free mechanism which primarily occurs during S and G2 phases. The complex (1) mediates the end resection of damaged DNA, which generates proper single-stranded DNA, a key initial steps in HR, and is (2) required for the recruitment of other repair factors and efficient activation of ATM and ATR upon DNA damage. The MRN complex possesses single-strand endonuclease activity and double-strand-specific 3'-5' exonuclease activity, which are provided by MRE11, to initiate end resection, which is required for single-strand invasion and recombination. Within the MRN complex, NBN acts as a protein-protein adapter, which specifically recognizes and binds phosphorylated proteins, promoting their recruitment to DNA damage sites. Recruits MRE11 and RAD50 components of the MRN complex to DSBs in response to DNA damage. Promotes the recruitment of PI3/PI4-kinase family members ATM, ATR, and probably DNA-PKcs to the DNA damage sites, activating their functions. Mediates the recruitment of phosphorylated RBBP8/CtIP to DSBs, leading to cooperation between the MRN complex and RBBP8/CtIP to initiate end resection. RBBP8/CtIP specifically promotes the endonuclease activity of the MRN complex to clear DNA ends containing protein adducts. The MRN complex is also required for the processing of R-loops. NBN also functions in telomere length maintenance via its interaction with TERF2: interaction with TERF2 during G1 phase preventing recruitment of DCLRE1B/Apollo to telomeres. NBN also promotes DNA repair choice at dysfunctional telomeres: NBN phosphorylation by CDK2 promotes non-homologous end joining repair at telomeres, while unphosphorylated NBN promotes microhomology-mediated end-joining (MMEJ) repair. Enhances AKT1 phosphorylation possibly by association with the mTORC2 complex. In Mus musculus (Mouse), this protein is Nibrin.